A 122-amino-acid polypeptide reads, in one-letter code: Basic phospholipase A2 Cdr-13 (122 aa).

7 disulfide bridges follow: Cys-26–Cys-115, Cys-28–Cys-44, Cys-43–Cys-95, Cys-49–Cys-122, Cys-50–Cys-88, Cys-57–Cys-81, and Cys-75–Cys-86. Positions 27, 29, and 31 each coordinate Ca(2+). Residue His-47 is part of the active site. Asp-48 contacts Ca(2+). Asp-89 is a catalytic residue.

Requires Ca(2+) as cofactor. Expressed by the venom gland.

Its subcellular location is the secreted. The catalysed reaction is a 1,2-diacyl-sn-glycero-3-phosphocholine + H2O = a 1-acyl-sn-glycero-3-phosphocholine + a fatty acid + H(+). Its function is as follows. Snake venom phospholipase A2 (PLA2) that induces myonecrosis and edema upon subcutaneous injections in mice. In vitro, causes a potent blockade of neuromuscular transmission in young chicken biventer cervicis preparation and produces cytotoxicity in murine C2C12 skeletal muscle myotubes and lack cytolytic activity upon myoblasts in vitro. PLA2 catalyzes the calcium-dependent hydrolysis of the 2-acyl groups in 3-sn-phosphoglycerides. This chain is Basic phospholipase A2 Cdr-13, found in Crotalus durissus ruruima (South American rattlesnake).